The following is a 236-amino-acid chain: ATP synthase subunit a (236 aa).

Transmembrane regions (helical) follow at residues 18 to 38 (STVMMLLVAAIIVFLIAFIST), 79 to 99 (GITLIMFIAVSNLLGLPFSIV), 112 to 132 (DPTVTMTLATMILVLSHFYGV), 174 to 194 (IYAGEILLGLLAGLASSGAVG), and 205 to 227 (WQGFSIFIGFIQAFIFTMLTMVY).

It belongs to the ATPase A chain family. In terms of assembly, F-type ATPases have 2 components, CF(1) - the catalytic core - and CF(0) - the membrane proton channel. CF(1) has five subunits: alpha(3), beta(3), gamma(1), delta(1), epsilon(1). CF(0) has three main subunits: a(1), b(2) and c(9-12). The alpha and beta chains form an alternating ring which encloses part of the gamma chain. CF(1) is attached to CF(0) by a central stalk formed by the gamma and epsilon chains, while a peripheral stalk is formed by the delta and b chains.

It localises to the cell membrane. In terms of biological role, key component of the proton channel; it plays a direct role in the translocation of protons across the membrane. In Lysinibacillus sphaericus (strain C3-41), this protein is ATP synthase subunit a.